Reading from the N-terminus, the 397-residue chain is 2,3,4,5-tetrahydropyridine-2,6-dicarboxylate N-succinyltransferase (397 aa).

The active-site Acyl-anhydride intermediate is E265. Succinyl-CoA is bound by residues R267, G282, S285, A308, 323–324, G331, K360, and 373–376; these read DA and RQNS.

The protein belongs to the type 2 tetrahydrodipicolinate N-succinyltransferase family. Homotrimer.

The protein localises to the cytoplasm. The catalysed reaction is (S)-2,3,4,5-tetrahydrodipicolinate + succinyl-CoA + H2O = (S)-2-succinylamino-6-oxoheptanedioate + CoA. Its pathway is amino-acid biosynthesis; L-lysine biosynthesis via DAP pathway; LL-2,6-diaminopimelate from (S)-tetrahydrodipicolinate (succinylase route): step 1/3. In terms of biological role, catalyzes the conversion of the cyclic tetrahydrodipicolinate (THDP) into the acyclic N-succinyl-L-2-amino-6-oxopimelate using succinyl-CoA. This chain is 2,3,4,5-tetrahydropyridine-2,6-dicarboxylate N-succinyltransferase, found in Sulfurovum sp. (strain NBC37-1).